The primary structure comprises 168 residues: Group 2 truncated hemoglobin 3-1 (168 aa).

Histidine 98 contacts heme b.

Belongs to the truncated hemoglobin family. Group II subfamily. In terms of assembly, homodimer when ferric. Mainly expressed in root nodules, but barely in leaves, roots, stems, flowers and fruits.

In terms of biological role, hemoglobin-like protein that exhibits an unusual concentration-independent binding of O(2) and CO. Required for general plant development and during nodulation. May promote shoot organogenesis from root explants. This is Group 2 truncated hemoglobin 3-1 from Lotus japonicus (Lotus corniculatus var. japonicus).